Reading from the N-terminus, the 1728-residue chain is U3 small nucleolar RNA-associated protein 10 (1728 aa).

7 HEAT repeats span residues 540–578, 881–926, 986–1024, 1191–1229, 1235–1274, 1622–1662, and 1683–1721; these read DKDFQAIIPYCAVALSDPAKKVRRAAADLIAVLGSLVKE, PANH…MMPA, FMGSSEVIPPLIDTFRRRGRNVVASTKDLLASFVTAYEH, LLSIAEFIKSVEALLDRPNVGLRQKVLRALELRVDSEST, REALLAFLPQLTAVIRESDDMSYKHTAVTCVDKISEKYGK, ADAT…GQAA, and LQALPEMLPYISELQDDDDEVVERENRRWIVEIEEKLGE.

Belongs to the HEATR1/UTP10 family. As to quaternary structure, component of the ribosomal small subunit (SSU) processome.

Its subcellular location is the nucleus. It is found in the nucleolus. Its function is as follows. Involved in nucleolar processing of pre-18S ribosomal RNA. Involved in ribosome biosynthesis. This chain is U3 small nucleolar RNA-associated protein 10, found in Chaetomium globosum (strain ATCC 6205 / CBS 148.51 / DSM 1962 / NBRC 6347 / NRRL 1970) (Soil fungus).